A 442-amino-acid chain; its full sequence is MRVLTPSLYIYAFFIFCVRFKCGNRTTVASAIRASYDMPPKELRVGDMLKKTSQPNCNYRTRGKCRKFFFVWKLDKMRDAHLGVQAKRRKNHLRSGSATYEASLGEHQLKGKRKESATNVEKEKKEKEQQEERLPVPKVGNKMPEKKPDWFHVPAPTGKKYNKLKEDLKKLKLHTVCEEAQCPNIGECWNIGTATIMLLGDTCTRGCKFCSIKTSSKPLAPDANEPFNTAKAICEWDINYVVLTSVDRDDLPDGGASHFAKTIELIKFSRPEILIECLVSDFQGNVDSIRKLANSGMEVYAHNIETVRRLQKFVRDRRANYEQSLRVLKIAKEINPMLYTKTSIMLGLGETKEEVLEAMSDVRQHNIDVITFGQYLRPTKNHLNVVEYVSPQMFDFYKEEGMKMGFKYIASGPLVRSSYKAGEYFMKSLVEQRRGAKTHAQG.

The first 23 residues, 1–23 (MRVLTPSLYIYAFFIFCVRFKCG), serve as a signal peptide directing secretion. The segment at 104 to 154 (LGEHQLKGKRKESATNVEKEKKEKEQQEERLPVPKVGNKMPEKKPDWFHVP) is disordered. Residues 114–135 (KESATNVEKEKKEKEQQEERLP) are compositionally biased toward basic and acidic residues. [4Fe-4S] cluster-binding residues include Cys-177, Cys-182, Cys-188, Cys-203, Cys-207, Cys-210, and Ser-418. One can recognise a Radical SAM core domain in the interval 189–407 (WNIGTATIML…KEEGMKMGFK (219 aa)).

This sequence belongs to the radical SAM superfamily. Lipoyl synthase family. [4Fe-4S] cluster serves as cofactor.

Its subcellular location is the plastid. The protein resides in the apicoplast. It catalyses the reaction [[Fe-S] cluster scaffold protein carrying a second [4Fe-4S](2+) cluster] + N(6)-octanoyl-L-lysyl-[protein] + 2 oxidized [2Fe-2S]-[ferredoxin] + 2 S-adenosyl-L-methionine + 4 H(+) = [[Fe-S] cluster scaffold protein] + N(6)-[(R)-dihydrolipoyl]-L-lysyl-[protein] + 4 Fe(3+) + 2 hydrogen sulfide + 2 5'-deoxyadenosine + 2 L-methionine + 2 reduced [2Fe-2S]-[ferredoxin]. It participates in protein modification; protein lipoylation via endogenous pathway; protein N(6)-(lipoyl)lysine from octanoyl-[acyl-carrier-protein]: step 2/2. Its function is as follows. Catalyzes the radical-mediated insertion of two sulfur atoms into the C-6 and C-8 positions of the octanoyl moiety bound to the lipoyl domains of lipoate-dependent enzymes, thereby converting the octanoylated domains into lipoylated derivatives. The sequence is that of Lipoyl synthase, apicoplast from Plasmodium knowlesi (strain H).